Reading from the N-terminus, the 437-residue chain is GTPase Obg (437 aa).

The region spanning Ser-2–Leu-160 is the Obg domain. One can recognise an OBG-type G domain in the interval Ala-161 to Ala-338. Residues Gly-167–Ser-174, Phe-192–Thr-196, Asp-214–Gly-217, Asn-284–Asp-287, and Ser-319–Leu-321 contribute to the GTP site. 2 residues coordinate Mg(2+): Ser-174 and Thr-194. In terms of domain architecture, OCT spans Gly-359–Asp-437.

The protein belongs to the TRAFAC class OBG-HflX-like GTPase superfamily. OBG GTPase family. As to quaternary structure, monomer. Requires Mg(2+) as cofactor.

It localises to the cytoplasm. An essential GTPase which binds GTP, GDP and possibly (p)ppGpp with moderate affinity, with high nucleotide exchange rates and a fairly low GTP hydrolysis rate. Plays a role in control of the cell cycle, stress response, ribosome biogenesis and in those bacteria that undergo differentiation, in morphogenesis control. The polypeptide is GTPase Obg (Lactococcus lactis subsp. lactis (strain IL1403) (Streptococcus lactis)).